Reading from the N-terminus, the 430-residue chain is Trigger factor (430 aa).

Residues 165–250 (TDIAIFDFEG…LHQIKTKKIP (86 aa)) enclose the PPIase FKBP-type domain.

Belongs to the FKBP-type PPIase family. Tig subfamily.

The protein localises to the cytoplasm. It catalyses the reaction [protein]-peptidylproline (omega=180) = [protein]-peptidylproline (omega=0). In terms of biological role, involved in protein export. Acts as a chaperone by maintaining the newly synthesized protein in an open conformation. Functions as a peptidyl-prolyl cis-trans isomerase. In Onion yellows phytoplasma (strain OY-M), this protein is Trigger factor.